The sequence spans 349 residues: Acyl-CoA:acyl-CoA alkyltransferase (349 aa).

Glu97 serves as the catalytic Proton acceptor. The Acyl-thioester intermediate role is filled by Cys123.

Belongs to the thiolase-like superfamily. OleA family.

It catalyses the reaction a 1,2-saturated acyl-CoA + an acyl-CoA + H2O = an (R)-2-alkyl-3-oxoalkanoate + 2 CoA + H(+). In terms of biological role, involved in olefin biosynthesis. Catalyzes a non-decarboxylative head-to-head Claisen condensation of two acyl-CoA molecules, generating an (R)-2-alkyl-3-oxoalkanoate. The S.oneidensis oleABCD genes produce 3,6,9,12,15,19,22,25,28-hentriacontanonaene, which may aid the cells in adapting to a sudden drop in temperature. This chain is Acyl-CoA:acyl-CoA alkyltransferase, found in Shewanella oneidensis (strain ATCC 700550 / JCM 31522 / CIP 106686 / LMG 19005 / NCIMB 14063 / MR-1).